The primary structure comprises 196 residues: Peptidyl-tRNA hydrolase (196 aa).

Tyrosine 18 provides a ligand contact to tRNA. The active-site Proton acceptor is histidine 23. 3 residues coordinate tRNA: phenylalanine 69, asparagine 71, and asparagine 117.

It belongs to the PTH family. In terms of assembly, monomer.

It localises to the cytoplasm. It catalyses the reaction an N-acyl-L-alpha-aminoacyl-tRNA + H2O = an N-acyl-L-amino acid + a tRNA + H(+). Hydrolyzes ribosome-free peptidyl-tRNAs (with 1 or more amino acids incorporated), which drop off the ribosome during protein synthesis, or as a result of ribosome stalling. Functionally, catalyzes the release of premature peptidyl moieties from peptidyl-tRNA molecules trapped in stalled 50S ribosomal subunits, and thus maintains levels of free tRNAs and 50S ribosomes. This Vibrio campbellii (strain ATCC BAA-1116) protein is Peptidyl-tRNA hydrolase.